The chain runs to 366 residues: tRNA-specific 2-thiouridylase MnmA (366 aa).

ATP-binding positions include 10-17 (GLSGGVDS) and Ile-36. Cys-98 (nucleophile) is an active-site residue. Cys-98 and Cys-194 form a disulfide bridge. Gly-122 contacts ATP. The interaction with tRNA stretch occupies residues 144 to 146 (KDQ). Residue Cys-194 is the Cysteine persulfide intermediate of the active site. The interval 303–304 (RY) is interaction with tRNA.

Belongs to the MnmA/TRMU family.

Its subcellular location is the cytoplasm. The catalysed reaction is S-sulfanyl-L-cysteinyl-[protein] + uridine(34) in tRNA + AH2 + ATP = 2-thiouridine(34) in tRNA + L-cysteinyl-[protein] + A + AMP + diphosphate + H(+). Functionally, catalyzes the 2-thiolation of uridine at the wobble position (U34) of tRNA, leading to the formation of s(2)U34. This chain is tRNA-specific 2-thiouridylase MnmA, found in Chlorobaculum tepidum (strain ATCC 49652 / DSM 12025 / NBRC 103806 / TLS) (Chlorobium tepidum).